Here is a 295-residue protein sequence, read N- to C-terminus: Aspartate carbamoyltransferase catalytic subunit (295 aa).

The carbamoyl phosphate site is built by Arg-49 and Thr-50. Lys-77 serves as a coordination point for L-aspartate. The carbamoyl phosphate site is built by Arg-99, His-127, and Gln-130. Positions 161 and 212 each coordinate L-aspartate. 2 residues coordinate carbamoyl phosphate: Gly-251 and Pro-252.

It belongs to the aspartate/ornithine carbamoyltransferase superfamily. ATCase family. As to quaternary structure, heterododecamer (2C3:3R2) of six catalytic PyrB chains organized as two trimers (C3), and six regulatory PyrI chains organized as three dimers (R2).

It carries out the reaction carbamoyl phosphate + L-aspartate = N-carbamoyl-L-aspartate + phosphate + H(+). It participates in pyrimidine metabolism; UMP biosynthesis via de novo pathway; (S)-dihydroorotate from bicarbonate: step 2/3. Functionally, catalyzes the condensation of carbamoyl phosphate and aspartate to form carbamoyl aspartate and inorganic phosphate, the committed step in the de novo pyrimidine nucleotide biosynthesis pathway. This chain is Aspartate carbamoyltransferase catalytic subunit, found in Campylobacter jejuni subsp. doylei (strain ATCC BAA-1458 / RM4099 / 269.97).